A 436-amino-acid chain; its full sequence is Calcium/calmodulin-regulated receptor-like kinase 2 (436 aa).

Residues 7 to 34 (LVVIGISVGLALGLLLALLLFFAIKWYY) traverse the membrane as a helical segment. The segment at 65 to 88 (DRANTESSQPPENGAPTQHQPWWN) is disordered. The span at 69–88 (TESSQPPENGAPTQHQPWWN) shows a compositional bias: polar residues. Residues 114–375 (QNFTTVLGQG…PSIGEVTQFI (262 aa)) enclose the Protein kinase domain. ATP contacts are provided by residues 120–128 (LGQGSFGPV) and Lys142. Tyr187 bears the Phosphotyrosine mark. The active-site Proton acceptor is Asp239. Thr276 bears the Phosphothreonine mark. Tyr284 is modified (phosphotyrosine).

Belongs to the protein kinase superfamily. Ser/Thr protein kinase family.

It is found in the cell membrane. The enzyme catalyses L-seryl-[protein] + ATP = O-phospho-L-seryl-[protein] + ADP + H(+). The catalysed reaction is L-threonyl-[protein] + ATP = O-phospho-L-threonyl-[protein] + ADP + H(+). This chain is Calcium/calmodulin-regulated receptor-like kinase 2, found in Arabidopsis thaliana (Mouse-ear cress).